A 153-amino-acid chain; its full sequence is Probable histone H2A.4 (153 aa).

The span at 1–12 shows a compositional bias: basic residues; the sequence is MDSGTKVKKGAA. Disordered regions lie at residues 1-30 and 129-153; these read MDSGTKVKKGAAGRRSGGGPKKKPVSRSVK and KSEKAASTTKTPKSPSKATKSPKKS. Positions 133–147 are enriched in low complexity; the sequence is AASTTKTPKSPSKAT. The SPKK motif signature appears at 149 to 152; sequence SPKK.

This sequence belongs to the histone H2A family. In terms of assembly, the nucleosome is a histone octamer containing two molecules each of H2A, H2B, H3 and H4 assembled in one H3-H4 heterotetramer and two H2A-H2B heterodimers. The octamer wraps approximately 147 bp of DNA. In terms of processing, not ubiquitinated.

It is found in the nucleus. The protein resides in the chromosome. In terms of biological role, core component of nucleosome. Nucleosomes wrap and compact DNA into chromatin, limiting DNA accessibility to the cellular machineries which require DNA as a template. Histones thereby play a central role in transcription regulation, DNA repair, DNA replication and chromosomal stability. DNA accessibility is regulated via a complex set of post-translational modifications of histones, also called histone code, and nucleosome remodeling. In Arabidopsis thaliana (Mouse-ear cress), this protein is Probable histone H2A.4.